The primary structure comprises 425 residues: CinA-like protein (425 aa).

It belongs to the CinA family.

In Mycobacterium marinum (strain ATCC BAA-535 / M), this protein is CinA-like protein.